A 345-amino-acid chain; its full sequence is S-adenosylmethionine:tRNA ribosyltransferase-isomerase (345 aa).

The protein belongs to the QueA family. As to quaternary structure, monomer.

It localises to the cytoplasm. The catalysed reaction is 7-aminomethyl-7-carbaguanosine(34) in tRNA + S-adenosyl-L-methionine = epoxyqueuosine(34) in tRNA + adenine + L-methionine + 2 H(+). It functions in the pathway tRNA modification; tRNA-queuosine biosynthesis. In terms of biological role, transfers and isomerizes the ribose moiety from AdoMet to the 7-aminomethyl group of 7-deazaguanine (preQ1-tRNA) to give epoxyqueuosine (oQ-tRNA). The sequence is that of S-adenosylmethionine:tRNA ribosyltransferase-isomerase from Anaeromyxobacter sp. (strain Fw109-5).